The primary structure comprises 187 residues: UPF0232 protein MUL_0004 (187 aa).

Positions 1–12 are enriched in gly residues; sequence MNGDGEQPGPGD. 2 disordered regions span residues 1 to 77 and 166 to 187; these read MNGD…QPLG and ASPS…DTYG. Basic and acidic residues predominate over residues 14-30; that stretch reads AARDELPSMDLVRRTLA. Residues 31-55 are compositionally biased toward low complexity; it reads EARAAARARGQDPGRGFAAGPAPRR.

It belongs to the UPF0232 family.

The chain is UPF0232 protein MUL_0004 from Mycobacterium ulcerans (strain Agy99).